The primary structure comprises 133 residues: Small ribosomal subunit protein uS8 (133 aa).

This sequence belongs to the universal ribosomal protein uS8 family. As to quaternary structure, part of the 30S ribosomal subunit. Contacts proteins S5 and S12.

In terms of biological role, one of the primary rRNA binding proteins, it binds directly to 16S rRNA central domain where it helps coordinate assembly of the platform of the 30S subunit. The chain is Small ribosomal subunit protein uS8 from Prochlorococcus marinus (strain MIT 9515).